Reading from the N-terminus, the 141-residue chain is Flagellar assembly factor FliW (141 aa).

This sequence belongs to the FliW family. Interacts with translational regulator CsrA and flagellin(s).

Its subcellular location is the cytoplasm. Its function is as follows. Acts as an anti-CsrA protein, binds CsrA and prevents it from repressing translation of its target genes, one of which is flagellin. Binds to flagellin and participates in the assembly of the flagellum. This Clostridium botulinum (strain Alaska E43 / Type E3) protein is Flagellar assembly factor FliW.